The sequence spans 569 residues: MRASQWFLVTQKETPNDAEIASHQLMLRSGMIRKLGSGLYTWMPLGLRVLRKVENIVREEMNKTHAMELLMPSVQPAELWQETGRWETFGGQLLTMKDSNQREYCFGPTHEEVITDIMRNELQSYKQLPVNFYQIQTKFRDEIRPRFGVMRAREFIMKDAYSFHLSLESLQETYKDMYQAYCRIFDRMGLKYRAVEADTGAIGGSASHEFQVLAESGEDLIFYSDASDYAANIEQATSLKPLKANQPCNETITLVDTPNQKTIDEVASFLGIASNQTIKTLIVKGKEHPMVALVLRGDDELNEVKAIKHPLVHAPLSFIDEELILKTLKTPLGSIGPIQLNIPVIVDHHALAMPSFVCGANQADKHFINAAWERDAKYDDAYDLRNVKEGDPSPDGKGTLHCCRGIEVGHVFQLGDKYAKAMNASVINEQGQLQTMIMGCYGLGITRVVAAAIEQHHDEHGIIWPQALAPFQVNIIPLNGARSQAVKEQAESLYQQLKSHGIDVLLDDRNERAGVLFADNDLIGIPHRLVVSERNLEQGCVEYKARISSETQLINLDKVVNFIIELINK.

The protein belongs to the class-II aminoacyl-tRNA synthetase family. ProS type 1 subfamily. Homodimer.

The protein resides in the cytoplasm. The catalysed reaction is tRNA(Pro) + L-proline + ATP = L-prolyl-tRNA(Pro) + AMP + diphosphate. Functionally, catalyzes the attachment of proline to tRNA(Pro) in a two-step reaction: proline is first activated by ATP to form Pro-AMP and then transferred to the acceptor end of tRNA(Pro). As ProRS can inadvertently accommodate and process non-cognate amino acids such as alanine and cysteine, to avoid such errors it has two additional distinct editing activities against alanine. One activity is designated as 'pretransfer' editing and involves the tRNA(Pro)-independent hydrolysis of activated Ala-AMP. The other activity is designated 'posttransfer' editing and involves deacylation of mischarged Ala-tRNA(Pro). The misacylated Cys-tRNA(Pro) is not edited by ProRS. The chain is Proline--tRNA ligase from Legionella pneumophila subsp. pneumophila (strain Philadelphia 1 / ATCC 33152 / DSM 7513).